The primary structure comprises 652 residues: Threonine--tRNA ligase (652 aa).

Positions 1–61 (MIKLKLPDGS…DRDAEVEIVT (61 aa)) constitute a TGS domain. The tract at residues 243-548 (DHRKIGREMD…LIENYEGRFP (306 aa)) is catalytic. Residues Cys-348, His-399, and His-525 each contribute to the Zn(2+) site.

It belongs to the class-II aminoacyl-tRNA synthetase family. In terms of assembly, homodimer. Zn(2+) serves as cofactor.

Its subcellular location is the cytoplasm. It catalyses the reaction tRNA(Thr) + L-threonine + ATP = L-threonyl-tRNA(Thr) + AMP + diphosphate + H(+). Its function is as follows. Catalyzes the attachment of threonine to tRNA(Thr) in a two-step reaction: L-threonine is first activated by ATP to form Thr-AMP and then transferred to the acceptor end of tRNA(Thr). Also edits incorrectly charged L-seryl-tRNA(Thr). In Parvibaculum lavamentivorans (strain DS-1 / DSM 13023 / NCIMB 13966), this protein is Threonine--tRNA ligase.